The primary structure comprises 539 residues: MGYKVEARSMEISMEDEDSRKKRKKGLNLPKKMKKILRNLWNVGKEDPRRVIHALKVGVALTLVSLLYLMEPFFEGVGKNALWAVMTVVVVLEFSAGATLRKGLNRGLGTLIAGSLAFFIEWVAIHSGKILGGIFIGTSVFTIGSMITYMRFIPYIKKNYDYGMLVFLLTFNLITVSSYRVDTVIKIAHERLYTIGMGIGICLFMSLLFFPIWSGDDLHKSTITKLQGLSRCIEACVSEYFEEKLKDNETSDSESDDEDLIYNGYNTVLDSKSADEALAMYAKWEPRHTRRCNKFPSQQYIKVGSVLRKFGYTVVALHGCLQTEIQTPRSIRVLFKDPCVRLAGEICKVLSELSESIQNRRHCSSEILSDSLEAALKDLNSTIKSQPKLFLGSNLHSNITNKHLNGHVSYYNETNSNGTVSYHNDNNTNGCVLGETIEENDTVSPLPLNSVVSLSSLRSVKKSAATGEKRRLRKQLSKIAVMKSLEFSEALPFAAFASLLVEMVARLDTVIDEVEELGTIACFKEYDKTVEVRIENRLI.

6 helical membrane passes run 57–77 (VGVA…FEGV), 80–100 (NALW…GATL), 107–127 (GLGT…AIHS), 130–150 (ILGG…ITYM), 165–185 (LVFL…DTVI), and 192–212 (LYTI…FFPI).

This sequence belongs to the aromatic acid exporter (TC 2.A.85) family.

It is found in the membrane. Functionally, malate transporter. The polypeptide is Aluminum-activated malate transporter 13 (ALMT13) (Arabidopsis thaliana (Mouse-ear cress)).